The following is a 103-amino-acid chain: Co-chaperonin GroES (103 aa).

It belongs to the GroES chaperonin family. In terms of assembly, heptamer of 7 subunits arranged in a ring. Interacts with the chaperonin GroEL.

It localises to the cytoplasm. In terms of biological role, together with the chaperonin GroEL, plays an essential role in assisting protein folding. The GroEL-GroES system forms a nano-cage that allows encapsulation of the non-native substrate proteins and provides a physical environment optimized to promote and accelerate protein folding. GroES binds to the apical surface of the GroEL ring, thereby capping the opening of the GroEL channel. The chain is Co-chaperonin GroES from Gloeothece citriformis (strain PCC 7424) (Cyanothece sp. (strain PCC 7424)).